The following is a 338-amino-acid chain: tRNA N6-adenosine threonylcarbamoyltransferase (338 aa).

3 residues coordinate Fe cation: histidine 110, histidine 114, and tyrosine 131. Substrate is bound by residues 131–135, aspartate 163, aspartate 184, and asparagine 268; that span reads YVSGG. Residue aspartate 296 participates in Fe cation binding.

It belongs to the KAE1 / TsaD family. Requires Fe(2+) as cofactor.

The protein resides in the cytoplasm. It carries out the reaction L-threonylcarbamoyladenylate + adenosine(37) in tRNA = N(6)-L-threonylcarbamoyladenosine(37) in tRNA + AMP + H(+). Required for the formation of a threonylcarbamoyl group on adenosine at position 37 (t(6)A37) in tRNAs that read codons beginning with adenine. Is probably involved in the transfer of the threonylcarbamoyl moiety of threonylcarbamoyl-AMP (TC-AMP) to the N6 group of A37. This Staphylothermus marinus (strain ATCC 43588 / DSM 3639 / JCM 9404 / F1) protein is tRNA N6-adenosine threonylcarbamoyltransferase.